Reading from the N-terminus, the 449-residue chain is Adenylosuccinate synthetase (449 aa).

Residues 12–18 and 40–42 each bind GTP; these read GDEGKGK and GHT. Catalysis depends on Asp-13, which acts as the Proton acceptor. Residues Asp-13 and Gly-40 each contribute to the Mg(2+) site. IMP is bound by residues 13–16, 38–41, Thr-128, Arg-142, Gln-223, Thr-238, and Arg-302; these read DEGK and NAGH. The active-site Proton donor is His-41. A substrate-binding site is contributed by 298-304; it reads TTTGRQR. GTP is bound by residues Arg-304, 330 to 332, and 412 to 414; these read KLD and SLG.

It belongs to the adenylosuccinate synthetase family. Homodimer. Requires Mg(2+) as cofactor.

Its subcellular location is the cytoplasm. The enzyme catalyses IMP + L-aspartate + GTP = N(6)-(1,2-dicarboxyethyl)-AMP + GDP + phosphate + 2 H(+). The protein operates within purine metabolism; AMP biosynthesis via de novo pathway; AMP from IMP: step 1/2. Plays an important role in the de novo pathway of purine nucleotide biosynthesis. Catalyzes the first committed step in the biosynthesis of AMP from IMP. The polypeptide is Adenylosuccinate synthetase (Synechococcus sp. (strain JA-2-3B'a(2-13)) (Cyanobacteria bacterium Yellowstone B-Prime)).